The following is a 465-amino-acid chain: Kynureninase (465 aa).

Residues Leu-116, Thr-117, 144 to 147 (FPSD), Asp-231, His-234, and Tyr-256 each bind pyridoxal 5'-phosphate. Lys-257 bears the N6-(pyridoxal phosphate)lysine mark. Trp-291 and Asn-319 together coordinate pyridoxal 5'-phosphate.

It belongs to the kynureninase family. As to quaternary structure, homodimer. Pyridoxal 5'-phosphate is required as a cofactor.

It localises to the cytoplasm. It catalyses the reaction L-kynurenine + H2O = anthranilate + L-alanine + H(+). The enzyme catalyses 3-hydroxy-L-kynurenine + H2O = 3-hydroxyanthranilate + L-alanine + H(+). It participates in amino-acid degradation; L-kynurenine degradation; L-alanine and anthranilate from L-kynurenine: step 1/1. It functions in the pathway cofactor biosynthesis; NAD(+) biosynthesis; quinolinate from L-kynurenine: step 2/3. Catalyzes the cleavage of L-kynurenine (L-Kyn) and L-3-hydroxykynurenine (L-3OHKyn) into anthranilic acid (AA) and 3-hydroxyanthranilic acid (3-OHAA), respectively. The chain is Kynureninase from Scheffersomyces stipitis (strain ATCC 58785 / CBS 6054 / NBRC 10063 / NRRL Y-11545) (Yeast).